A 490-amino-acid polypeptide reads, in one-letter code: Betaine aldehyde dehydrogenase (490 aa).

Residue Asp-93 participates in K(+) binding. 150–152 (GAW) serves as a coordination point for NAD(+). The Charge relay system role is filled by Lys-162. 176 to 179 (KPSE) contributes to the NAD(+) binding site. Val-180 provides a ligand contact to K(+). 230–233 (GIAS) is a binding site for NAD(+). Leu-246 contacts K(+). Glu-252 functions as the Proton acceptor in the catalytic mechanism. Residues Gly-254, Cys-286, and Glu-387 each contribute to the NAD(+) site. The active-site Nucleophile is Cys-286. At Cys-286 the chain carries Cysteine sulfenic acid (-SOH). Residues Lys-457 and Gly-460 each coordinate K(+). Glu-464 acts as the Charge relay system in catalysis.

Belongs to the aldehyde dehydrogenase family. Dimer of dimers. The cofactor is K(+).

The enzyme catalyses betaine aldehyde + NAD(+) + H2O = glycine betaine + NADH + 2 H(+). It participates in amine and polyamine biosynthesis; betaine biosynthesis via choline pathway; betaine from betaine aldehyde: step 1/1. In terms of biological role, involved in the biosynthesis of the osmoprotectant glycine betaine. Catalyzes the irreversible oxidation of betaine aldehyde to the corresponding acid. The chain is Betaine aldehyde dehydrogenase from Pectobacterium carotovorum subsp. carotovorum (strain PC1).